We begin with the raw amino-acid sequence, 449 residues long: Trigger factor (449 aa).

In terms of domain architecture, PPIase FKBP-type spans 173-258 (GDRVTLDFVG…LKKVEWAHLP (86 aa)).

The protein belongs to the FKBP-type PPIase family. Tig subfamily.

It is found in the cytoplasm. The catalysed reaction is [protein]-peptidylproline (omega=180) = [protein]-peptidylproline (omega=0). Involved in protein export. Acts as a chaperone by maintaining the newly synthesized protein in an open conformation. Functions as a peptidyl-prolyl cis-trans isomerase. This Cupriavidus metallidurans (strain ATCC 43123 / DSM 2839 / NBRC 102507 / CH34) (Ralstonia metallidurans) protein is Trigger factor.